The following is a 1096-amino-acid chain: Pullulanase (1096 aa).

Positions 1–19 are cleaved as a signal peptide; that stretch reads MLRYTCHALFLGSLVLLSG. C20 carries N-palmitoyl cysteine lipidation. A lipid anchor (S-diacylglycerol cysteine) is attached at C20. Low complexity predominate over residues 24 to 34; that stretch reads SSSSTSGSPGS. The interval 24 to 50 is disordered; that stretch reads SSSSTSGSPGSPGNPGNPGTPGTPDPQ. The Nucleophile role is filled by D694. E723 serves as the catalytic Proton donor. The disordered stretch occupies residues 1014–1044; that stretch reads QAGRQSGQPCRRHRGGDQRRAGKPDAAGLRR.

Belongs to the glycosyl hydrolase 13 family. In terms of assembly, homotrimer.

The protein localises to the cell membrane. It catalyses the reaction Hydrolysis of (1-&gt;6)-alpha-D-glucosidic linkages in pullulan, amylopectin and glycogen, and in the alpha- and beta-limit dextrins of amylopectin and glycogen.. The polypeptide is Pullulanase (pulA) (Klebsiella aerogenes (Enterobacter aerogenes)).